Consider the following 122-residue polypeptide: Large ribosomal subunit protein uL14 (122 aa).

The protein belongs to the universal ribosomal protein uL14 family. Part of the 50S ribosomal subunit. Forms a cluster with proteins L3 and L19. In the 70S ribosome, L14 and L19 interact and together make contacts with the 16S rRNA in bridges B5 and B8.

In terms of biological role, binds to 23S rRNA. Forms part of two intersubunit bridges in the 70S ribosome. This chain is Large ribosomal subunit protein uL14, found in Chloroflexus aurantiacus (strain ATCC 29366 / DSM 635 / J-10-fl).